Consider the following 214-residue polypeptide: Phosphatidylcholine transfer protein (214 aa).

Met-1 is modified (N-acetylmethionine). The START domain occupies 1 to 212 (MAGPAAHFSD…MVKACQNYHK (212 aa)). A 1,2-diacyl-sn-glycero-3-phosphocholine-binding residues include Tyr-72 and Arg-78. At Ser-139 the chain carries Phosphoserine. Gln-157 contributes to the a 1,2-diacyl-sn-glycero-3-phosphocholine binding site.

As to quaternary structure, interacts with ACOT13/THEM2.

The protein localises to the cytoplasm. Its function is as follows. Lipid transfer protein that promotes intermembrane transfer of phosphatidylcholines but no other phospholipids. Binds a single lipid molecule. May play a role in hepatocellular selection and transport of phosphatidylcholines during bile formation. The polypeptide is Phosphatidylcholine transfer protein (Pctp) (Rattus norvegicus (Rat)).